The primary structure comprises 156 residues: Deoxyuridine 5'-triphosphate nucleotidohydrolase (156 aa).

Residues 76-78, N89, 93-95, and K103 contribute to the substrate site; these read RSG and TVD.

It belongs to the dUTPase family. Requires Mg(2+) as cofactor.

It catalyses the reaction dUTP + H2O = dUMP + diphosphate + H(+). It participates in pyrimidine metabolism; dUMP biosynthesis; dUMP from dCTP (dUTP route): step 2/2. In terms of biological role, this enzyme is involved in nucleotide metabolism: it produces dUMP, the immediate precursor of thymidine nucleotides and it decreases the intracellular concentration of dUTP so that uracil cannot be incorporated into DNA. This is Deoxyuridine 5'-triphosphate nucleotidohydrolase from Rhizobium etli (strain ATCC 51251 / DSM 11541 / JCM 21823 / NBRC 15573 / CFN 42).